Reading from the N-terminus, the 571-residue chain is Medium/long-chain-fatty-acid--CoA ligase FadD8 (571 aa).

A disordered region spans residues 1–22 (MSTAGDDAVGVPPACGGRSDAV).

Belongs to the ATP-dependent AMP-binding enzyme family.

It carries out the reaction a medium-chain fatty acid + ATP + CoA = a medium-chain fatty acyl-CoA + AMP + diphosphate. It catalyses the reaction a long-chain fatty acid + ATP + CoA = a long-chain fatty acyl-CoA + AMP + diphosphate. The catalysed reaction is hexanoate + ATP + CoA = hexanoyl-CoA + AMP + diphosphate. The enzyme catalyses dodecanoate + ATP + CoA = dodecanoyl-CoA + AMP + diphosphate. It carries out the reaction hexadecanoate + ATP + CoA = hexadecanoyl-CoA + AMP + diphosphate. It functions in the pathway lipid metabolism; fatty acid metabolism. Catalyzes the activation of medium/long-chain fatty acids as acyl-coenzyme A (acyl-CoA). The chain is Medium/long-chain-fatty-acid--CoA ligase FadD8 from Mycobacterium tuberculosis (strain ATCC 25618 / H37Rv).